Reading from the N-terminus, the 191-residue chain is Probable nicotinate-nucleotide adenylyltransferase (191 aa).

The protein belongs to the NadD family.

The catalysed reaction is nicotinate beta-D-ribonucleotide + ATP + H(+) = deamido-NAD(+) + diphosphate. It functions in the pathway cofactor biosynthesis; NAD(+) biosynthesis; deamido-NAD(+) from nicotinate D-ribonucleotide: step 1/1. Catalyzes the reversible adenylation of nicotinate mononucleotide (NaMN) to nicotinic acid adenine dinucleotide (NaAD). This is Probable nicotinate-nucleotide adenylyltransferase from Oceanobacillus iheyensis (strain DSM 14371 / CIP 107618 / JCM 11309 / KCTC 3954 / HTE831).